Here is a 190-residue protein sequence, read N- to C-terminus: NAD(P)H-quinone oxidoreductase subunit I (190 aa).

2 4Fe-4S ferredoxin-type domains span residues 55–84 (GRIH…VDWT) and 95–124 (KHYS…MTEE). [4Fe-4S] cluster contacts are provided by Cys64, Cys67, Cys70, Cys74, Cys104, Cys107, Cys110, and Cys114. A disordered region spans residues 169–190 (IEPHDLPAGSQRAGKRPEEITD).

It belongs to the complex I 23 kDa subunit family. As to quaternary structure, NDH-1 is composed of at least 11 different subunits. The cofactor is [4Fe-4S] cluster.

The protein localises to the cellular thylakoid membrane. The catalysed reaction is a plastoquinone + NADH + (n+1) H(+)(in) = a plastoquinol + NAD(+) + n H(+)(out). It catalyses the reaction a plastoquinone + NADPH + (n+1) H(+)(in) = a plastoquinol + NADP(+) + n H(+)(out). NDH-1 shuttles electrons from an unknown electron donor, via FMN and iron-sulfur (Fe-S) centers, to quinones in the respiratory and/or the photosynthetic chain. The immediate electron acceptor for the enzyme in this species is believed to be plastoquinone. Couples the redox reaction to proton translocation, and thus conserves the redox energy in a proton gradient. In Microcystis aeruginosa (strain NIES-843 / IAM M-2473), this protein is NAD(P)H-quinone oxidoreductase subunit I.